The chain runs to 212 residues: Ribosomal RNA large subunit methyltransferase E (212 aa).

S-adenosyl-L-methionine-binding residues include G57, W59, D77, D93, and D122. Catalysis depends on K162, which acts as the Proton acceptor.

It belongs to the class I-like SAM-binding methyltransferase superfamily. RNA methyltransferase RlmE family.

The protein localises to the cytoplasm. It carries out the reaction uridine(2552) in 23S rRNA + S-adenosyl-L-methionine = 2'-O-methyluridine(2552) in 23S rRNA + S-adenosyl-L-homocysteine + H(+). Specifically methylates the uridine in position 2552 of 23S rRNA at the 2'-O position of the ribose in the fully assembled 50S ribosomal subunit. The polypeptide is Ribosomal RNA large subunit methyltransferase E (Coxiella burnetii (strain RSA 331 / Henzerling II)).